The primary structure comprises 450 residues: Tubulin beta-3 chain (450 aa).

The GTP site is built by glutamine 11, glutamate 69, serine 138, glycine 142, threonine 143, glycine 144, asparagine 204, and asparagine 226. Glutamate 69 serves as a coordination point for Mg(2+). The interval 420 to 450 (SEYQQYQDATADEEGDYEDEEEGEYQQEEEY) is disordered. A compositionally biased stretch (acidic residues) spans 429–450 (TADEEGDYEDEEEGEYQQEEEY).

The protein belongs to the tubulin family. In terms of assembly, dimer of alpha and beta chains. A typical microtubule is a hollow water-filled tube with an outer diameter of 25 nm and an inner diameter of 15 nM. Alpha-beta heterodimers associate head-to-tail to form protofilaments running lengthwise along the microtubule wall with the beta-tubulin subunit facing the microtubule plus end conferring a structural polarity. Microtubules usually have 13 protofilaments but different protofilament numbers can be found in some organisms and specialized cells. Mg(2+) is required as a cofactor.

The protein resides in the cytoplasm. It is found in the cytoskeleton. Tubulin is the major constituent of microtubules, a cylinder consisting of laterally associated linear protofilaments composed of alpha- and beta-tubulin heterodimers. Microtubules grow by the addition of GTP-tubulin dimers to the microtubule end, where a stabilizing cap forms. Below the cap, tubulin dimers are in GDP-bound state, owing to GTPase activity of alpha-tubulin. This Arabidopsis thaliana (Mouse-ear cress) protein is Tubulin beta-3 chain (TUBB3).